The primary structure comprises 345 residues: Dihydroorotase (345 aa).

2 residues coordinate Zn(2+): histidine 13 and histidine 15. Substrate-binding positions include 15–17 and asparagine 41; that span reads HFR. Lysine 98, histidine 135, and histidine 173 together coordinate Zn(2+). Lysine 98 carries the post-translational modification N6-carboxylysine. Position 135 (histidine 135) interacts with substrate. Leucine 218 is a substrate binding site. Aspartate 246 contacts Zn(2+). The active site involves aspartate 246. Residues histidine 250 and alanine 262 each coordinate substrate.

The protein belongs to the metallo-dependent hydrolases superfamily. DHOase family. Class II DHOase subfamily. Homodimer. Zn(2+) serves as cofactor.

It catalyses the reaction (S)-dihydroorotate + H2O = N-carbamoyl-L-aspartate + H(+). It functions in the pathway pyrimidine metabolism; UMP biosynthesis via de novo pathway; (S)-dihydroorotate from bicarbonate: step 3/3. Functionally, catalyzes the reversible cyclization of carbamoyl aspartate to dihydroorotate. The polypeptide is Dihydroorotase (Shewanella piezotolerans (strain WP3 / JCM 13877)).